Here is a 304-residue protein sequence, read N- to C-terminus: GTPase Era (304 aa).

Residues 11-179 (YCGFIAIVGR…QKIVRKSLRE (169 aa)) form the Era-type G domain. Residues 19–26 (GRPNVGKS) form a G1 region. Position 19–26 (19–26 (GRPNVGKS)) interacts with GTP. A G2 region spans residues 45-49 (QTTRH). The G3 stretch occupies residues 66–69 (DTPG). GTP-binding positions include 66-70 (DTPGL) and 128-131 (NKVD). A G4 region spans residues 128-131 (NKVD). The G5 stretch occupies residues 158–160 (ISA). The region spanning 210 to 287 (TGEELPYSVT…HLELWVKVKA (78 aa)) is the KH type-2 domain.

It belongs to the TRAFAC class TrmE-Era-EngA-EngB-Septin-like GTPase superfamily. Era GTPase family. In terms of assembly, monomer.

It is found in the cytoplasm. Its subcellular location is the cell inner membrane. Its function is as follows. An essential GTPase that binds both GDP and GTP, with rapid nucleotide exchange. Plays a role in 16S rRNA processing and 30S ribosomal subunit biogenesis and possibly also in cell cycle regulation and energy metabolism. In Haemophilus ducreyi (strain 35000HP / ATCC 700724), this protein is GTPase Era.